The sequence spans 302 residues: Probable alpha-L-glutamate ligase (302 aa).

The 184-residue stretch at 105-288 (LQLLARKGIP…LAGKIIEYIE (184 aa)) folds into the ATP-grasp domain. ATP contacts are provided by residues lysine 142, 179-180 (EF), aspartate 188, and 212-214 (RAN). Aspartate 249, glutamate 261, and asparagine 263 together coordinate Mg(2+). The Mn(2+) site is built by aspartate 249, glutamate 261, and asparagine 263.

This sequence belongs to the RimK family. The cofactor is Mg(2+). Requires Mn(2+) as cofactor.

The chain is Probable alpha-L-glutamate ligase from Legionella pneumophila (strain Paris).